The primary structure comprises 505 residues: Flagellin (505 aa).

The protein belongs to the bacterial flagellin family.

It is found in the secreted. The protein localises to the bacterial flagellum. Functionally, flagellin is the subunit protein which polymerizes to form the filaments of bacterial flagella. In Salmonella senftenberg, this protein is Flagellin (fliC).